The chain runs to 682 residues: Heat shock 70 kDa protein, mitochondrial (682 aa).

A mitochondrion-targeting transit peptide spans 1–57; it reads MATAALLRSLRRREFATSSISAYRTLASNTKPSWCPSLVGAKWAGLARPFSSKPAGN. A disordered region spans residues 649–682; it reads GEHMAGGSSGGASGGGGAQGGDQPPEAEYEEVKK. Positions 655–668 are enriched in gly residues; that stretch reads GSSGGASGGGGAQG. Over residues 673 to 682 the composition is skewed to acidic residues; it reads PEAEYEEVKK.

This sequence belongs to the heat shock protein 70 family.

It localises to the mitochondrion. In Solanum tuberosum (Potato), this protein is Heat shock 70 kDa protein, mitochondrial (HSP68).